Here is a 500-residue protein sequence, read N- to C-terminus: 7-alpha-hydroxycholest-4-en-3-one 12-alpha-hydroxylase (500 aa).

A helical membrane pass occupies residues 2-21; sequence VLWGLLGALLMVMVGWLCLP. At Ser325 the chain carries Phosphoserine. Cys439 lines the heme pocket.

Belongs to the cytochrome P450 family. It depends on heme as a cofactor. In terms of tissue distribution, liver (at protein level).

The protein localises to the endoplasmic reticulum membrane. It is found in the microsome membrane. It carries out the reaction 7alpha-hydroxycholest-4-en-3-one + reduced [NADPH--hemoprotein reductase] + O2 = 7alpha,12alpha-dihydroxycholest-4-en-3-one + oxidized [NADPH--hemoprotein reductase] + H2O + H(+). The enzyme catalyses 5beta-cholestane-3alpha,7alpha-diol + reduced [NADPH--hemoprotein reductase] + O2 = 5beta-cholestane-3alpha,7alpha,12alpha-triol + oxidized [NADPH--hemoprotein reductase] + H2O + H(+). It catalyses the reaction chenodeoxycholate + reduced [NADPH--hemoprotein reductase] + O2 = cholate + oxidized [NADPH--hemoprotein reductase] + H2O + H(+). The protein operates within lipid metabolism; bile acid biosynthesis. Its activity is regulated as follows. Up-regulated upon treatment with streptozotocin. Its function is as follows. A cytochrome P450 monooxygenase involved in primary bile acid biosynthesis. Catalyzes the 12alpha-hydroxylation of 7alpha-hydroxy-4-cholesten-3-one, an intermediate metabolite in cholic acid biosynthesis. Controls biliary balance of cholic acid and chenodeoxycholic acid, ultimately regulating the intestinal absorption of dietary lipids. Mechanistically, uses molecular oxygen inserting one oxygen atom into a substrate, and reducing the second into a water molecule, with two electrons provided by NADPH via cytochrome P450 reductase (CPR; NADPH--hemoprotein reductase). This Oryctolagus cuniculus (Rabbit) protein is 7-alpha-hydroxycholest-4-en-3-one 12-alpha-hydroxylase (CYP8B1).